Consider the following 108-residue polypeptide: FK506-binding protein 1 (108 aa).

One can recognise a PPIase FKBP-type domain in the interval 20–108 (GDAVTIHYVG…VFDVELLGIN (89 aa)).

It belongs to the FKBP-type PPIase family. FKBP1 subfamily.

The protein resides in the cytoplasm. It catalyses the reaction [protein]-peptidylproline (omega=180) = [protein]-peptidylproline (omega=0). With respect to regulation, inhibited by both FK506 and rapamycin. Its function is as follows. PPIases accelerate the folding of proteins. It catalyzes the cis-trans isomerization of proline imidic peptide bonds in oligopeptides. This Yarrowia lipolytica (strain CLIB 122 / E 150) (Yeast) protein is FK506-binding protein 1 (FPR1).